The following is a 198-amino-acid chain: Probable chemoreceptor glutamine deamidase CheD (198 aa).

This sequence belongs to the CheD family.

It carries out the reaction L-glutaminyl-[protein] + H2O = L-glutamyl-[protein] + NH4(+). Probably deamidates glutamine residues to glutamate on methyl-accepting chemotaxis receptors (MCPs), playing an important role in chemotaxis. In Xanthomonas euvesicatoria pv. vesicatoria (strain 85-10) (Xanthomonas campestris pv. vesicatoria), this protein is Probable chemoreceptor glutamine deamidase CheD.